Reading from the N-terminus, the 398-residue chain is Fructose-bisphosphate aldolase 2, chloroplastic (398 aa).

The transit peptide at 1–46 (MASTSLLKASPVLDKSEWVKGQSVLFRQPSSASVVLRNRATSLTVR) directs the protein to the chloroplast. Position 95 (arginine 95) interacts with substrate. Position 157 is a phosphoserine (serine 157). Lysine 185 provides a ligand contact to substrate. Serine 215 is modified (phosphoserine). Glutamate 225 acts as the Proton acceptor in catalysis. The active-site Schiff-base intermediate with dihydroxyacetone-P is the lysine 267. 309–311 (SGG) lines the substrate pocket. Lysine 394 is modified (N6,N6,N6-trimethyllysine).

This sequence belongs to the class I fructose-bisphosphate aldolase family. Homotetramer. Can be trimethylated at Lys-394 by LSMT-L. The methylation level has no influence on the ologomerization state or on the kinetic properties of the enzyme. In terms of processing, phosphorylated on tyrosine residues in response to abscisic acid (ABA) in germinating seeds. Highly expressed in rosettes leaves.

The protein resides in the plastid. The protein localises to the chloroplast. It localises to the plastoglobule. It is found in the chloroplast stroma. It catalyses the reaction beta-D-fructose 1,6-bisphosphate = D-glyceraldehyde 3-phosphate + dihydroxyacetone phosphate. It participates in carbohydrate degradation; glycolysis; D-glyceraldehyde 3-phosphate and glycerone phosphate from D-glucose: step 4/4. Plays a key role in glycolysis and gluconeogenesis. The chain is Fructose-bisphosphate aldolase 2, chloroplastic from Arabidopsis thaliana (Mouse-ear cress).